We begin with the raw amino-acid sequence, 209 residues long: Small ribosomal subunit protein uS3 (209 aa).

The KH type-2 domain occupies 17–86 (IDEYLEKELR…NPQIEVEEIK (70 aa)).

The protein belongs to the universal ribosomal protein uS3 family. In terms of assembly, part of the 30S ribosomal subunit.

Functionally, binds the lower part of the 30S subunit head. The protein is Small ribosomal subunit protein uS3 of Thermococcus gammatolerans (strain DSM 15229 / JCM 11827 / EJ3).